A 432-amino-acid chain; its full sequence is Trigger factor (432 aa).

Residues 161 to 246 form the PPIase FKBP-type domain; the sequence is EDRVTIDFTG…LKKVEERELP (86 aa).

This sequence belongs to the FKBP-type PPIase family. Tig subfamily.

The protein localises to the cytoplasm. The catalysed reaction is [protein]-peptidylproline (omega=180) = [protein]-peptidylproline (omega=0). Its function is as follows. Involved in protein export. Acts as a chaperone by maintaining the newly synthesized protein in an open conformation. Functions as a peptidyl-prolyl cis-trans isomerase. The protein is Trigger factor of Salmonella typhi.